We begin with the raw amino-acid sequence, 433 residues long: Histidine--tRNA ligase (433 aa).

The protein belongs to the class-II aminoacyl-tRNA synthetase family. As to quaternary structure, homodimer.

Its subcellular location is the cytoplasm. It catalyses the reaction tRNA(His) + L-histidine + ATP = L-histidyl-tRNA(His) + AMP + diphosphate + H(+). This is Histidine--tRNA ligase from Blochmanniella floridana.